Here is a 336-residue protein sequence, read N- to C-terminus: Glycerol-3-phosphate dehydrogenase [NAD(P)+] (336 aa).

The NADPH site is built by serine 11, tryptophan 12, arginine 32, arginine 33, and lysine 110. Residues lysine 110 and glycine 140 each coordinate sn-glycerol 3-phosphate. Position 144 (alanine 144) interacts with NADPH. Sn-glycerol 3-phosphate contacts are provided by lysine 195, aspartate 248, serine 258, arginine 259, and asparagine 260. Lysine 195 serves as the catalytic Proton acceptor. Arginine 259 contributes to the NADPH binding site. Positions 284 and 286 each coordinate NADPH.

This sequence belongs to the NAD-dependent glycerol-3-phosphate dehydrogenase family.

Its subcellular location is the cytoplasm. The catalysed reaction is sn-glycerol 3-phosphate + NAD(+) = dihydroxyacetone phosphate + NADH + H(+). It carries out the reaction sn-glycerol 3-phosphate + NADP(+) = dihydroxyacetone phosphate + NADPH + H(+). The protein operates within membrane lipid metabolism; glycerophospholipid metabolism. Its function is as follows. Catalyzes the reduction of the glycolytic intermediate dihydroxyacetone phosphate (DHAP) to sn-glycerol 3-phosphate (G3P), the key precursor for phospholipid synthesis. This is Glycerol-3-phosphate dehydrogenase [NAD(P)+] from Nocardia farcinica (strain IFM 10152).